The primary structure comprises 722 residues: Endoglucanase F (722 aa).

Residues M1–A29 form the signal peptide. The segment at P142–I165 is disordered. The span at L154 to I165 shows a compositional bias: polar residues. Positions P661 to Q722 constitute a Dockerin domain.

Belongs to the glycosyl hydrolase 48 (cellulase L) family.

The enzyme catalyses Endohydrolysis of (1-&gt;4)-beta-D-glucosidic linkages in cellulose, lichenin and cereal beta-D-glucans.. Functionally, probable endoglucanase involved in the degradation of cellulose or related beta-glucans. In Ruminiclostridium cellulolyticum (strain ATCC 35319 / DSM 5812 / JCM 6584 / H10) (Clostridium cellulolyticum), this protein is Endoglucanase F (celCCF).